A 301-amino-acid polypeptide reads, in one-letter code: Protoheme IX farnesyltransferase 1 (301 aa).

A run of 9 helical transmembrane segments spans residues 29 to 49 (VVAL…PHAV), 51 to 71 (VQPL…AAAL), 101 to 121 (ALIF…SLVN), 123 to 143 (LTAW…TAYL), 150 to 170 (NIVI…TAVT), 177 to 197 (ALLL…ALAI), 223 to 243 (CILL…LVGM), 244 to 264 (CGPV…YKAW), and 274 to 294 (LAMQ…MALL).

Belongs to the UbiA prenyltransferase family. Protoheme IX farnesyltransferase subfamily.

The protein localises to the cell inner membrane. It carries out the reaction heme b + (2E,6E)-farnesyl diphosphate + H2O = Fe(II)-heme o + diphosphate. Its pathway is porphyrin-containing compound metabolism; heme O biosynthesis; heme O from protoheme: step 1/1. Functionally, converts heme B (protoheme IX) to heme O by substitution of the vinyl group on carbon 2 of heme B porphyrin ring with a hydroxyethyl farnesyl side group. In Shewanella baltica (strain OS195), this protein is Protoheme IX farnesyltransferase 1.